The chain runs to 819 residues: Sulfate permease 2 (819 aa).

Asn-24 carries an N-linked (GlcNAc...) asparagine glycan. 10 helical membrane-spanning segments follow: residues 72 to 92, 104 to 124, 129 to 149, 172 to 192, 194 to 214, 273 to 293, 328 to 348, 365 to 385, 454 to 474, and 477 to 497; these read YNLT…FVVV, LAPE…WAFA, ITIG…ANVQ, LLFL…IVAI, AFMT…LMGI, FFVS…VSWL, ILSA…IEHI, SQEL…GGYP, FWLT…VSIF, and IENG…WRIA. Residues 551–708 enclose the STAS domain; that stretch reads ELQISTPWPG…ENHKGGVQEV (158 aa). Asn-581 carries N-linked (GlcNAc...) asparagine glycosylation. Positions 726 to 766 are disordered; it reads EAVPVGTSGSGSTDEKRPEGEGGATNGGMEKGSANGEDIST. Residues 746 to 755 are compositionally biased toward gly residues; that stretch reads EGGATNGGME.

It belongs to the SLC26A/SulP transporter (TC 2.A.53) family. In terms of tissue distribution, mainly found in mycelia.

It is found in the membrane. Functionally, uptake of sulfate into the cell. In Neurospora crassa (strain ATCC 24698 / 74-OR23-1A / CBS 708.71 / DSM 1257 / FGSC 987), this protein is Sulfate permease 2 (cys-14).